The sequence spans 382 residues: Lipid-A-disaccharide synthase (382 aa).

Belongs to the LpxB family.

The catalysed reaction is 2-N,3-O-bis[(3R)-3-hydroxytetradecanoyl]-alpha-D-glucosaminyl 1-phosphate + UDP-2-N,3-O-bis[(3R)-3-hydroxytetradecanoyl]-alpha-D-glucosamine = lipid A disaccharide (E. coli) + UDP + H(+). It carries out the reaction a lipid X + a UDP-2-N,3-O-bis[(3R)-3-hydroxyacyl]-alpha-D-glucosamine = a lipid A disaccharide + UDP + H(+). Its pathway is glycolipid biosynthesis; lipid IV(A) biosynthesis; lipid IV(A) from (3R)-3-hydroxytetradecanoyl-[acyl-carrier-protein] and UDP-N-acetyl-alpha-D-glucosamine: step 5/6. Condensation of UDP-2,3-diacylglucosamine and 2,3-diacylglucosamine-1-phosphate to form lipid A disaccharide, a precursor of lipid A, a phosphorylated glycolipid that anchors the lipopolysaccharide to the outer membrane of the cell. This Shigella boydii serotype 18 (strain CDC 3083-94 / BS512) protein is Lipid-A-disaccharide synthase.